The sequence spans 530 residues: MPMSLGNAFIKNFLGKAPDWYKVAIIAFLIINPIVFFFINPFLAGWLLVVEFIFTLAMALKCYPLQPGGLLAIEAIAIGMTSPGQVKHELVANIEVLLLLVFMVAGIYFMKQLLLFIFTKILLGIRSKVLLSIAFSVTAAFLSAFLDALTVIAVIISVAVGFYSIYHKVASGQSVHSSHDHTHDEGISELTRDDLENYRAFLRSLLMHAGVGTALGGVTTMVGEPQNLIIADQAGWQFGEFLLRMAPVTVPVFIAGMLTCMLVEKFRIFGYGARLPANVRQILLDFDSEERKNRTNQDVAKLWVQGAIAVWLIVGLALHLAAVGLIGLSVIILATAFTGVIEEHSLGKAFEEALPFTALLAVFFSIVAVIIDQELFKPVIDAVLNVEDHGTQLALFYVANGLLSMVSDNVFVGTVYITEVKTALMEGMISRDQFDLLAVAINTGTNLPSVATPNGQAAFLFLLTSALAPLIRLSYGRMVIMAFPYTLALSLVGFIGIMFLLEPMTEVFYSLGWISHHVAPAADALLQSGH.

The next 11 helical transmembrane spans lie at 23 to 43 (VAII…NPFL), 45 to 65 (GWLL…CYPL), 90 to 110 (LVAN…IYFM), 113 to 133 (LLLF…LLSI), 140 to 160 (AFLS…SVAV), 205 to 225 (LLMH…VGEP), 238 to 258 (FGEF…AGML), 308 to 328 (IAVW…LIGL), 351 to 371 (EEAL…AVII), 451 to 471 (ATPN…APLI), and 479 to 499 (VIMA…GIMF).

Belongs to the NhaB Na(+)/H(+) (TC 2.A.34) antiporter family.

The protein resides in the cell inner membrane. It catalyses the reaction 2 Na(+)(in) + 3 H(+)(out) = 2 Na(+)(out) + 3 H(+)(in). Functionally, na(+)/H(+) antiporter that extrudes sodium in exchange for external protons. This Vibrio cholerae serotype O1 (strain ATCC 39541 / Classical Ogawa 395 / O395) protein is Na(+)/H(+) antiporter NhaB.